The primary structure comprises 192 residues: Acetolactate synthase small subunit (192 aa).

Positions Ile-29–Asp-103 constitute an ACT domain.

The protein belongs to the acetolactate synthase small subunit family. Dimer of large and small chains.

The enzyme catalyses 2 pyruvate + H(+) = (2S)-2-acetolactate + CO2. It participates in amino-acid biosynthesis; L-isoleucine biosynthesis; L-isoleucine from 2-oxobutanoate: step 1/4. It functions in the pathway amino-acid biosynthesis; L-valine biosynthesis; L-valine from pyruvate: step 1/4. The sequence is that of Acetolactate synthase small subunit (ilvH) from Aquifex aeolicus (strain VF5).